The primary structure comprises 264 residues: MTNLHRDLAPISAAAWAEIEEEASRTFKRHVAGRRVVDVEGPSGDDLAAIPLGHQVPINPLADGVIAHARQSQPVIELRVPFTVSRQAIDDVERGAKDSDWQPVKDAAKQIAFAEDRAIFEGYPAASITGVRASGSNPELKLPIDAKDYPEAISQAITSLRLAGVNGPYSLLLNADAFTAINETSDHGYPIREHLRRVLDGEIIWAPAIDGAFLLSTRGGDYELHLGQDLSIGYLSHDANSVELYFQESMTFLMYTSEAVVSLA.

It belongs to the encapsulin family. Family 1 subfamily. In terms of assembly, forms hollow shells composed of 60 subunits. Monomers probably form pentamers which assemble into the shell. There are 12 pores where the pentamers meet as well as 3-fold axis channels and dimer channels; none are larger than 3-4 Angstroms in diameter. The N-terminus of the protein is inside the shell, the C-terminus is outside.

It localises to the encapsulin nanocompartment. In terms of biological role, shell component of a type 1 encapsulin nanocompartment. Assembles into proteinaceous shells 21-24 nm in diameter. Empty organelles can be expressed in E.coli. Cargo proteins (DypB) are targeted to the interior via their C-terminal extensions. In Rhodococcus erythropolis (strain PR4 / NBRC 100887), this protein is Type 1 encapsulin shell protein.